We begin with the raw amino-acid sequence, 31 residues long: Photosystem II reaction center protein T (31 aa).

The chain crosses the membrane as a helical span at residues 3-23 (ALVYTFLLIGTLGIIFFAIFF).

Belongs to the PsbT family. PSII is composed of 1 copy each of membrane proteins PsbA, PsbB, PsbC, PsbD, PsbE, PsbF, PsbH, PsbI, PsbJ, PsbK, PsbL, PsbM, PsbT, PsbY, PsbZ, Psb30/Ycf12, at least 3 peripheral proteins of the oxygen-evolving complex and a large number of cofactors. It forms dimeric complexes.

It localises to the plastid. It is found in the chloroplast thylakoid membrane. In terms of biological role, found at the monomer-monomer interface of the photosystem II (PS II) dimer, plays a role in assembly and dimerization of PSII. PSII is a light-driven water plastoquinone oxidoreductase, using light energy to abstract electrons from H(2)O, generating a proton gradient subsequently used for ATP formation. The chain is Photosystem II reaction center protein T from Stigeoclonium helveticum (Green alga).